Consider the following 57-residue polypeptide: High light-inducible protein HliD (57 aa).

The Chlorophyll-binding motif motif lies at 25–30 (EKLNGR). Residues 25–46 (EKLNGRAAMVGFLLILVIEYFT) form a helical membrane-spanning segment.

This sequence belongs to the Hlip family. Probably forms dimers which bind 6 chlorophyll a and 2 beta-carotenoid molecules. Cofractionates in an approximately 50 kDa fraction of the thylakoid membrane with HliC. Does not associate with mature PSII. Purified in several chlorophyll- and carotenoid-containing complexes, including photosystem II (PSII) assembly intermediate complex RCII* (iD1, D1, D2, PsbE, PsbF, PsbI, Ycf39, Ycf48, HliC and HliD) and the Ycf39-Hlip complex (Ycf39, HliC, HliD and pigments).

Its subcellular location is the cellular thylakoid membrane. Involved in photosystem II (PSII) assembly and/or repair under high light stress. Required for binding of chlorophyll and carotenoids by the Ycf39-Hlip complex. The Ycf39-Hlip complex binds D1 at an early stage of PSII assembly along with Ycf48, ribosomes and ChlG, the last enzyme in chlorophyll biosynthesis; it may be involved in chlorophyll reuse and delivery to D1 in the initial stages of PSII assembly. Binds chlorophyll a and beta-carotenoid in a 3:1 stoichiometry in the presence and absence of Yfc39; in the Ycf39-HliC-HliD complex, HliD binds all the pigment. The Ycf39-Hlip complex efficiently quenches chlorophyll fluorescence, contributing to photoprotection. Deletion of 4 to 5 members of the Hlip family suggests the proteins are involved in regulation of chlorophyll biosynthesis, in stabilization of chlorophyll-binding proteins and/or in reuse of chlorophylls, and may regulate tetrapyrrole biosynthesis. Might bind chlorophyll and/or carotenoids in association with HliC (called the ScpBE pair). Its function is as follows. The Hlips might regulate tetrapyrrole biosynthesis, maybe at the level of aminolevulinic acid synthesis and probably stabilize PSII assembly intermediates. The chain is High light-inducible protein HliD (hliD) from Synechocystis sp. (strain ATCC 27184 / PCC 6803 / Kazusa).